Consider the following 567-residue polypeptide: Phosphoglucomutase-like protein 5 (567 aa).

Positions 1 to 26 (MEGSPIPVLTVPTAPYEDQRPTGGGG) are disordered. A Phosphothreonine modification is found at Thr120. Ser122 carries the phosphoserine modification.

Belongs to the phosphohexose mutase family. Interacts with DMD/dystrophin; the interaction is direct. Interacts with UTRN/utrophin.

It localises to the cell junction. Its subcellular location is the adherens junction. The protein localises to the cytoplasm. The protein resides in the cytoskeleton. It is found in the cell membrane. It localises to the sarcolemma. Component of adherens-type cell-cell and cell-matrix junctions. Has no phosphoglucomutase activity in vitro. The sequence is that of Phosphoglucomutase-like protein 5 from Mus musculus (Mouse).